The sequence spans 571 residues: Glutamine--tRNA ligase (571 aa).

Residues 35–45 (PEPNGYLHIGH) carry the 'HIGH' region motif. ATP-binding positions include 36–38 (EPN) and 42–48 (HIGHAKS). D68 and Y213 together coordinate L-glutamine. Residues T232, 262–263 (RL), and 270–272 (LSK) each bind ATP. The 'KMSKS' region motif lies at 269–273 (ILSKR).

This sequence belongs to the class-I aminoacyl-tRNA synthetase family. Monomer.

The protein localises to the cytoplasm. The enzyme catalyses tRNA(Gln) + L-glutamine + ATP = L-glutaminyl-tRNA(Gln) + AMP + diphosphate. The sequence is that of Glutamine--tRNA ligase from Buchnera aphidicola subsp. Acyrthosiphon pisum (strain Tuc7).